The sequence spans 80 residues: Turripeptide VI/VII-01 (80 aa).

The signal sequence occupies residues 1 to 22 (MRLQLILTITLLLTSFMGYRDA). Residues 23 to 36 (AVIQGKTERSAMKM) constitute a propeptide that is removed on maturation. Cystine bridges form between Cys48–Cys61, Cys50–Cys65, and Cys60–Cys70. Positions 77 to 80 (SSAI) are excised as a propeptide.

As to expression, expressed by the venom duct.

It is found in the secreted. This is Turripeptide VI/VII-01 from Gemmula speciosa (Splendid gem-turris).